A 79-amino-acid polypeptide reads, in one-letter code: Sulfur carrier protein TusA (79 aa).

The Cysteine persulfide intermediate role is filled by cysteine 17.

The protein belongs to the sulfur carrier protein TusA family.

Its subcellular location is the cytoplasm. Functionally, sulfur carrier protein which probably makes part of a sulfur-relay system. The chain is Sulfur carrier protein TusA from Mannheimia succiniciproducens (strain KCTC 0769BP / MBEL55E).